Reading from the N-terminus, the 496-residue chain is Probable cytosol aminopeptidase (496 aa).

Residues lysine 267 and aspartate 272 each coordinate Mn(2+). Residue lysine 279 is part of the active site. Residues aspartate 290, aspartate 349, and glutamate 351 each coordinate Mn(2+). Residue arginine 353 is part of the active site.

Belongs to the peptidase M17 family. Requires Mn(2+) as cofactor.

It localises to the cytoplasm. The enzyme catalyses Release of an N-terminal amino acid, Xaa-|-Yaa-, in which Xaa is preferably Leu, but may be other amino acids including Pro although not Arg or Lys, and Yaa may be Pro. Amino acid amides and methyl esters are also readily hydrolyzed, but rates on arylamides are exceedingly low.. It carries out the reaction Release of an N-terminal amino acid, preferentially leucine, but not glutamic or aspartic acids.. Functionally, presumably involved in the processing and regular turnover of intracellular proteins. Catalyzes the removal of unsubstituted N-terminal amino acids from various peptides. In Methylobacillus flagellatus (strain ATCC 51484 / DSM 6875 / VKM B-1610 / KT), this protein is Probable cytosol aminopeptidase.